Reading from the N-terminus, the 297-residue chain is Bifunctional protein FolD 1 (297 aa).

NADP(+) contacts are provided by residues 164 to 166 (GRS) and Thr-230.

Belongs to the tetrahydrofolate dehydrogenase/cyclohydrolase family. Homodimer.

It catalyses the reaction (6R)-5,10-methylene-5,6,7,8-tetrahydrofolate + NADP(+) = (6R)-5,10-methenyltetrahydrofolate + NADPH. The enzyme catalyses (6R)-5,10-methenyltetrahydrofolate + H2O = (6R)-10-formyltetrahydrofolate + H(+). The protein operates within one-carbon metabolism; tetrahydrofolate interconversion. Its function is as follows. Catalyzes the oxidation of 5,10-methylenetetrahydrofolate to 5,10-methenyltetrahydrofolate and then the hydrolysis of 5,10-methenyltetrahydrofolate to 10-formyltetrahydrofolate. The polypeptide is Bifunctional protein FolD 1 (Rhodococcus jostii (strain RHA1)).